A 420-amino-acid polypeptide reads, in one-letter code: Glutamyl-tRNA reductase (420 aa).

Substrate-binding positions include 49-52, Ser109, 114-116, and Gln120; these read TCNR and EPQ. Cys50 (nucleophile) is an active-site residue. 189 to 194 contributes to the NADP(+) binding site; sequence GAGETI.

It belongs to the glutamyl-tRNA reductase family. As to quaternary structure, homodimer.

It catalyses the reaction (S)-4-amino-5-oxopentanoate + tRNA(Glu) + NADP(+) = L-glutamyl-tRNA(Glu) + NADPH + H(+). The protein operates within porphyrin-containing compound metabolism; protoporphyrin-IX biosynthesis; 5-aminolevulinate from L-glutamyl-tRNA(Glu): step 1/2. Catalyzes the NADPH-dependent reduction of glutamyl-tRNA(Glu) to glutamate 1-semialdehyde (GSA). This Sodalis glossinidius (strain morsitans) protein is Glutamyl-tRNA reductase.